The primary structure comprises 1589 residues: Centrosomal protein of 170 kDa protein B (1589 aa).

The FHA domain occupies 23-73; that stretch reads IFVGREECELMLQSRSVDKQHAVINYDQDRDEHWVKDLGSLNGTFVNDMRI. 4 disordered regions span residues 130-261, 287-309, 325-388, and 409-583; these read RSEA…GAAP, ITKFSLRQRRPPGKEATPGEMVS, LLHR…RLQR, and FDED…EVEE. Composition is skewed to basic and acidic residues over residues 147–156 and 243–253; these read RPEKGDRRPG and PAHEMPTKDAE. The span at 330–344 shows a compositional bias: basic and acidic residues; that stretch reads GPGDDRHSTKSDLPV. Residues S360 and S421 each carry the phosphoserine modification. 2 stretches are compositionally biased toward basic and acidic residues: residues 430–446 and 467–476; these read PKADKRRGPTPADRDRP and LKREKTEERL. Over residues 478–489 the composition is skewed to low complexity; the sequence is SPSPASRTPARP. 2 positions are modified to phosphoserine: S480 and S492. Pro residues predominate over residues 520-530; the sequence is EKVPPVLPAPL. A Phosphoserine modification is found at S536. Positions 538–548 are enriched in pro residues; it reads VGPPTPPPAPT. T542 is subject to Phosphothreonine. S597, S619, S655, S711, S721, S746, S748, S751, S753, S772, S829, S853, S954, S972, S986, and S988 each carry phosphoserine. Disordered stretches follow at residues 598 to 895, 934 to 1316, 1350 to 1374, and 1532 to 1552; these read PELS…LQDL, DAEC…PYGF, DGDTLGSSEPAHSASLSNMPSTPAS, and AQPGLGKGRVAAQSPPSPASA. Residues 711 to 722 show a composition bias toward low complexity; it reads SPAGPESSRRSG. Over residues 957-972 the composition is skewed to polar residues; the sequence is DTASTVSLRSGKSGPS. Over residues 1029–1038 the composition is skewed to basic residues; that stretch reads SAIRRGHRPR. Phosphoserine is present on residues S1135, S1179, and S1199. A compositionally biased stretch (polar residues) spans 1221 to 1230; the sequence is AANTATTTGP. Positions 1286–1301 are enriched in low complexity; that stretch reads PRAGSSSRARSRAPGP. Position 1304 is a phosphothreonine (T1304). Residues S1356 and S1362 each carry the phosphoserine modification. Over residues 1363 to 1374 the composition is skewed to polar residues; the sequence is ASLSNMPSTPAS. Over residues 1542 to 1552 the composition is skewed to low complexity; it reads AAQSPPSPASA. Phosphoserine occurs at positions 1545 and 1548.

The protein belongs to the CEP170 family.

Its subcellular location is the cytoplasm. It localises to the cytoskeleton. Plays a role in microtubule organization. This is Centrosomal protein of 170 kDa protein B (CEP170B) from Homo sapiens (Human).